A 479-amino-acid polypeptide reads, in one-letter code: Ribosomal RNA small subunit methyltransferase F (479 aa).

S-adenosyl-L-methionine is bound by residues 125–131 (AAAPGSK), Glu-149, Asp-176, and Asp-194. Cys-247 serves as the catalytic Nucleophile.

This sequence belongs to the class I-like SAM-binding methyltransferase superfamily. RsmB/NOP family.

It is found in the cytoplasm. It catalyses the reaction cytidine(1407) in 16S rRNA + S-adenosyl-L-methionine = 5-methylcytidine(1407) in 16S rRNA + S-adenosyl-L-homocysteine + H(+). In terms of biological role, specifically methylates the cytosine at position 1407 (m5C1407) of 16S rRNA. The sequence is that of Ribosomal RNA small subunit methyltransferase F from Escherichia coli (strain SMS-3-5 / SECEC).